A 292-amino-acid polypeptide reads, in one-letter code: 4-hydroxy-tetrahydrodipicolinate synthase (292 aa).

Thr45 contributes to the pyruvate binding site. Tyr133 functions as the Proton donor/acceptor in the catalytic mechanism. Lys161 serves as the catalytic Schiff-base intermediate with substrate. Ile203 serves as a coordination point for pyruvate.

The protein belongs to the DapA family. As to quaternary structure, homotetramer; dimer of dimers.

The protein resides in the cytoplasm. The catalysed reaction is L-aspartate 4-semialdehyde + pyruvate = (2S,4S)-4-hydroxy-2,3,4,5-tetrahydrodipicolinate + H2O + H(+). The protein operates within amino-acid biosynthesis; L-lysine biosynthesis via DAP pathway; (S)-tetrahydrodipicolinate from L-aspartate: step 3/4. Its function is as follows. Catalyzes the condensation of (S)-aspartate-beta-semialdehyde [(S)-ASA] and pyruvate to 4-hydroxy-tetrahydrodipicolinate (HTPA). The sequence is that of 4-hydroxy-tetrahydrodipicolinate synthase from Acidiphilium cryptum (strain JF-5).